Reading from the N-terminus, the 471-residue chain is Heat shock 70 kDa protein 13 (471 aa).

Positions 1–22 (MAREMTILGSAVLTLLLAGYLA) are cleaved as a signal peptide. Residues 315–341 (EQDRKEPHSSDTELPKDKLSSADDHRV) show a composition bias toward basic and acidic residues. Residues 315–352 (EQDRKEPHSSDTELPKDKLSSADDHRVNSGFGRGLSDK) are disordered.

It belongs to the heat shock protein 70 family. Binds UBQLN2. In terms of tissue distribution, constitutively expressed in all tissues.

Its subcellular location is the microsome. The protein localises to the endoplasmic reticulum. In terms of biological role, has peptide-independent ATPase activity. This chain is Heat shock 70 kDa protein 13 (HSPA13), found in Homo sapiens (Human).